Consider the following 276-residue polypeptide: Acyl-[acyl-carrier-protein]--UDP-N-acetylglucosamine O-acyltransferase (276 aa).

It belongs to the transferase hexapeptide repeat family. LpxA subfamily. As to quaternary structure, homotrimer.

It localises to the cytoplasm. The catalysed reaction is a (3R)-hydroxyacyl-[ACP] + UDP-N-acetyl-alpha-D-glucosamine = a UDP-3-O-[(3R)-3-hydroxyacyl]-N-acetyl-alpha-D-glucosamine + holo-[ACP]. The protein operates within glycolipid biosynthesis; lipid IV(A) biosynthesis; lipid IV(A) from (3R)-3-hydroxytetradecanoyl-[acyl-carrier-protein] and UDP-N-acetyl-alpha-D-glucosamine: step 1/6. In terms of biological role, involved in the biosynthesis of lipid A, a phosphorylated glycolipid that anchors the lipopolysaccharide to the outer membrane of the cell. The sequence is that of Acyl-[acyl-carrier-protein]--UDP-N-acetylglucosamine O-acyltransferase from Gloeothece citriformis (strain PCC 7424) (Cyanothece sp. (strain PCC 7424)).